A 1027-amino-acid polypeptide reads, in one-letter code: Kinesin heavy chain isoform 5A (1027 aa).

Ala-2 is modified (N-acetylalanine). The 319-residue stretch at Ser-9–Ile-327 folds into the Kinesin motor domain. Residue Gly-86–Thr-93 coordinates ATP. The microtubule-binding stretch occupies residues Val-174–Lys-315. The tract at residues Glu-271–Ala-361 is necessary for interaction with ZFYVE27. Residues Ala-331–Tyr-906 adopt a coiled-coil conformation. Residues Thr-353 to Ser-1027 form an interaction with BICD2 region. Thr-397 is modified (phosphothreonine). The segment at Tyr-906–Gly-937 is disordered. The tract at residues Lys-907–Ser-1027 is globular.

This sequence belongs to the TRAFAC class myosin-kinesin ATPase superfamily. Kinesin family. Kinesin subfamily. Oligomer composed of two heavy chains and two light chains. Interacts with GRIP1. Interacts with FMR1 (via C-terminus); this interaction is increased in a mGluR-dependent manner. Interacts with BORCS5. Interacts with ZFYVE27. Interacts with VAPA, VAPB, SURF4, RAB11A (GDP-bound form), RAB11B (GDP-bound form) and RTN3 in a ZFYVE27-dependent manner. Interacts with BICD2. Interacts with DTNB.

The protein localises to the cytoplasm. It is found in the perinuclear region. Its subcellular location is the cytoskeleton. It localises to the perikaryon. It catalyses the reaction ATP + H2O + a kinesin associated with a microtubule at position (n) = ADP + phosphate a kinesin associated with a microtubule at position (n+1, toward the plus end).. Its function is as follows. Microtubule-dependent motor required for slow axonal transport of neurofilament proteins (NFH, NFM and NFL). Can induce formation of neurite-like membrane protrusions in non-neuronal cells in a ZFYVE27-dependent manner. The ZFYVE27-KIF5A complex contributes to the vesicular transport of VAPA, VAPB, SURF4, RAB11A, RAB11B and RTN3 proteins in neurons. Required for anterograde axonal transportation of MAPK8IP3/JIP3 which is essential for MAPK8IP3/JIP3 function in axon elongation. This Mus musculus (Mouse) protein is Kinesin heavy chain isoform 5A (Kif5a).